A 180-amino-acid polypeptide reads, in one-letter code: Mediator of RNA polymerase II transcription subunit 31 (180 aa).

2 disordered regions span residues 1-24 (MQALPTILPPPPLPDDSEAPARTP) and 123-180 (WRVG…GQAL). Positions 127-138 (KPAEDKQSEEKP) are enriched in basic and acidic residues. Over residues 145 to 154 (LDDDEEEDEP) the composition is skewed to acidic residues.

The protein belongs to the Mediator complex subunit 31 family. Component of the Mediator complex.

Its subcellular location is the nucleus. Its function is as follows. Component of the Mediator complex, a coactivator involved in the regulated transcription of nearly all RNA polymerase II-dependent genes. Mediator functions as a bridge to convey information from gene-specific regulatory proteins to the basal RNA polymerase II transcription machinery. Mediator is recruited to promoters by direct interactions with regulatory proteins and serves as a scaffold for the assembly of a functional preinitiation complex with RNA polymerase II and the general transcription factors. The protein is Mediator of RNA polymerase II transcription subunit 31 (SOH1) of Cryptococcus neoformans var. neoformans serotype D (strain B-3501A) (Filobasidiella neoformans).